The following is a 308-amino-acid chain: Bifunctional protein FolD (308 aa).

Residues 171 to 173 (GRS), Ser198, and Ile239 each bind NADP(+).

Belongs to the tetrahydrofolate dehydrogenase/cyclohydrolase family. As to quaternary structure, homodimer.

It catalyses the reaction (6R)-5,10-methylene-5,6,7,8-tetrahydrofolate + NADP(+) = (6R)-5,10-methenyltetrahydrofolate + NADPH. The catalysed reaction is (6R)-5,10-methenyltetrahydrofolate + H2O = (6R)-10-formyltetrahydrofolate + H(+). It participates in one-carbon metabolism; tetrahydrofolate interconversion. Catalyzes the oxidation of 5,10-methylenetetrahydrofolate to 5,10-methenyltetrahydrofolate and then the hydrolysis of 5,10-methenyltetrahydrofolate to 10-formyltetrahydrofolate. This chain is Bifunctional protein FolD, found in Borreliella burgdorferi (strain ZS7) (Borrelia burgdorferi).